Consider the following 419-residue polypeptide: Gamma-glutamyl phosphate reductase (419 aa).

This sequence belongs to the gamma-glutamyl phosphate reductase family.

It is found in the cytoplasm. The enzyme catalyses L-glutamate 5-semialdehyde + phosphate + NADP(+) = L-glutamyl 5-phosphate + NADPH + H(+). It participates in amino-acid biosynthesis; L-proline biosynthesis; L-glutamate 5-semialdehyde from L-glutamate: step 2/2. Functionally, catalyzes the NADPH-dependent reduction of L-glutamate 5-phosphate into L-glutamate 5-semialdehyde and phosphate. The product spontaneously undergoes cyclization to form 1-pyrroline-5-carboxylate. This Azobacteroides pseudotrichonymphae genomovar. CFP2 protein is Gamma-glutamyl phosphate reductase.